Here is a 322-residue protein sequence, read N- to C-terminus: Transaldolase (322 aa).

The Schiff-base intermediate with substrate role is filled by Lys132.

Belongs to the transaldolase family. Type 1 subfamily. In terms of assembly, homodimer.

The protein localises to the cytoplasm. The catalysed reaction is D-sedoheptulose 7-phosphate + D-glyceraldehyde 3-phosphate = D-erythrose 4-phosphate + beta-D-fructose 6-phosphate. Its pathway is carbohydrate degradation; pentose phosphate pathway; D-glyceraldehyde 3-phosphate and beta-D-fructose 6-phosphate from D-ribose 5-phosphate and D-xylulose 5-phosphate (non-oxidative stage): step 2/3. Its function is as follows. Transaldolase is important for the balance of metabolites in the pentose-phosphate pathway. The chain is Transaldolase from Protochlamydia amoebophila (strain UWE25).